We begin with the raw amino-acid sequence, 425 residues long: Tyrosine--tRNA ligase (425 aa).

Tyr-37 provides a ligand contact to L-tyrosine. Positions 42–51 (PTADSLHLGH) match the 'HIGH' region motif. Positions 174 and 178 each coordinate L-tyrosine. Positions 234–238 (KFGKS) match the 'KMSKS' region motif. Residue Lys-237 coordinates ATP. The S4 RNA-binding domain occupies 357 to 422 (DGLIDALAAS…RGKKLYALLV (66 aa)).

The protein belongs to the class-I aminoacyl-tRNA synthetase family. TyrS type 1 subfamily. In terms of assembly, homodimer.

It is found in the cytoplasm. It carries out the reaction tRNA(Tyr) + L-tyrosine + ATP = L-tyrosyl-tRNA(Tyr) + AMP + diphosphate + H(+). Functionally, catalyzes the attachment of tyrosine to tRNA(Tyr) in a two-step reaction: tyrosine is first activated by ATP to form Tyr-AMP and then transferred to the acceptor end of tRNA(Tyr). This chain is Tyrosine--tRNA ligase, found in Laribacter hongkongensis (strain HLHK9).